A 637-amino-acid polypeptide reads, in one-letter code: Pentatricopeptide repeat-containing protein At1g12300, mitochondrial (637 aa).

A mitochondrion-targeting transit peptide spans 1–95; the sequence is MVKLMIRRLS…PTVIDFSRLF (95 aa). 15 PPR repeats span residues 87-121, 122-156, 157-191, 192-226, 227-261, 262-296, 297-331, 332-366, 367-401, 402-436, 437-471, 472-506, 507-541, 542-576, and 577-611; these read TVID…GIAH, NLYT…GYEP, NTIT…GHKP, DLIT…GCQP, NAVT…NIKL, DAVK…GITT, NIIT…KINP, NVVT…GIAP, DTIT…GCDP, NIRT…GVVA, DTVT…KVPP, NIVT…KMEL, DIGI…GVKP, GVKT…GHAP, and DGWT…GFSV.

The protein belongs to the PPR family. P subfamily.

Its subcellular location is the mitochondrion. This is Pentatricopeptide repeat-containing protein At1g12300, mitochondrial from Arabidopsis thaliana (Mouse-ear cress).